A 736-amino-acid chain; its full sequence is Meiotic expression up-regulated protein 27 (736 aa).

Belongs to the UPF0300 family.

The sequence is that of Meiotic expression up-regulated protein 27 (meu27) from Schizosaccharomyces pombe (strain 972 / ATCC 24843) (Fission yeast).